We begin with the raw amino-acid sequence, 103 residues long: Acyl carrier protein (103 aa).

The region spanning 14–89 is the Carrier domain; it reads NIVSNIVQDI…EFIDFTLQTI (76 aa). Ser49 is modified (O-(pantetheine 4'-phosphoryl)serine).

Belongs to the acyl carrier protein (ACP) family. 4'-phosphopantetheine is transferred from CoA to a specific serine of apo-ACP by AcpS. This modification is essential for activity because fatty acids are bound in thioester linkage to the sulfhydryl of the prosthetic group.

It is found in the plastid. The protein localises to the cyanelle. It functions in the pathway lipid metabolism; fatty acid biosynthesis. In terms of biological role, carrier of the growing fatty acid chain in fatty acid biosynthesis. This chain is Acyl carrier protein, found in Cyanophora paradoxa.